We begin with the raw amino-acid sequence, 303 residues long: RING finger protein 148 (303 aa).

An N-terminal signal peptide occupies residues 1-34; that stretch reads MSLLRITSSAHSSASSRLWRLGIFLLLSLPDSKG. N43 carries an N-linked (GlcNAc...) asparagine glycan. Residues 65-167 enclose the PA domain; it reads HSPLERVSGV…LKGMELLHLI (103 aa). The chain crosses the membrane as a helical span at residues 186–208; it reads WLSHYIMSLFTFLTATVAYLFLY. The RING-type; atypical zinc finger occupies 256 to 297; sequence CVVCFDIYKPQDVVRILTCKHIFHKACIDPWLLAHRTCPMCK.

It is found in the membrane. This chain is RING finger protein 148 (RNF148), found in Bos taurus (Bovine).